The chain runs to 250 residues: Ureidoacrylate amidohydrolase RutB (250 aa).

Asp-44 acts as the Proton acceptor in catalysis. Residue Lys-153 is part of the active site. The active-site Nucleophile is the Cys-186.

This sequence belongs to the isochorismatase family. RutB subfamily.

It carries out the reaction (Z)-3-ureidoacrylate + H2O + H(+) = (Z)-3-aminoacrylate + NH4(+) + CO2. It catalyses the reaction (Z)-3-ureidoacrylate + H2O = (Z)-3-aminoacrylate + carbamate + H(+). The enzyme catalyses (Z)-2-methylureidoacrylate + H2O + H(+) = (Z)-2-methylaminoacrylate + NH4(+) + CO2. Its function is as follows. Hydrolyzes ureidoacrylate to form aminoacrylate and carbamate. The carbamate hydrolyzes spontaneously, thereby releasing one of the nitrogen atoms of the pyrimidine ring as ammonia and one of its carbon atoms as CO2. The sequence is that of Ureidoacrylate amidohydrolase RutB from Pantoea ananatis (strain LMG 20103).